We begin with the raw amino-acid sequence, 303 residues long: Phosphate import ATP-binding protein PstB (303 aa).

The ABC transporter domain maps to leucine 56–isoleucine 298. ATP is bound at residue glycine 88–serine 95.

The protein belongs to the ABC transporter superfamily. Phosphate importer (TC 3.A.1.7) family. In terms of assembly, the complex is composed of two ATP-binding proteins (PstB), two transmembrane proteins (PstC and PstA) and a solute-binding protein (PstS).

Its subcellular location is the cell inner membrane. The enzyme catalyses phosphate(out) + ATP + H2O = ADP + 2 phosphate(in) + H(+). Its function is as follows. Part of the ABC transporter complex PstSACB involved in phosphate import. Responsible for energy coupling to the transport system. The polypeptide is Phosphate import ATP-binding protein PstB (Acinetobacter baylyi (strain ATCC 33305 / BD413 / ADP1)).